The sequence spans 856 residues: Protein translocase subunit SecA (856 aa).

Residues Gln-77, 95-99, and Asp-534 each bind ATP; that span reads GEGKT.

Belongs to the SecA family. As to quaternary structure, monomer and homodimer. Part of the essential Sec protein translocation apparatus which comprises SecA, SecYEG and auxiliary proteins SecDF. Other proteins may also be involved.

Its subcellular location is the cell inner membrane. It localises to the cytoplasm. The catalysed reaction is ATP + H2O + cellular proteinSide 1 = ADP + phosphate + cellular proteinSide 2.. In terms of biological role, part of the Sec protein translocase complex. Interacts with the SecYEG preprotein conducting channel. Has a central role in coupling the hydrolysis of ATP to the transfer of proteins into and across the cell membrane, serving as an ATP-driven molecular motor driving the stepwise translocation of polypeptide chains across the membrane. In Thermosipho africanus (strain TCF52B), this protein is Protein translocase subunit SecA.